A 454-amino-acid chain; its full sequence is Bifunctional protein GlmU (454 aa).

The segment at 1–227 (MTQLSVVILA…FMEVEGANNR (227 aa)) is pyrophosphorylase. Residues 9–12 (LAAG), Lys-23, Gln-74, 79–80 (GT), 101–103 (YGD), Gly-138, Glu-152, Asn-167, and Asn-225 each bind UDP-N-acetyl-alpha-D-glucosamine. Position 103 (Asp-103) interacts with Mg(2+). Asn-225 provides a ligand contact to Mg(2+). Residues 228–248 (LQLAALERFYQKTQAEKLLLA) are linker. Residues 249–454 (GVRLIDQARF…QGWQRPTKKK (206 aa)) form an N-acetyltransferase region. The UDP-N-acetyl-alpha-D-glucosamine site is built by Arg-331 and Lys-349. The active-site Proton acceptor is His-361. 2 residues coordinate UDP-N-acetyl-alpha-D-glucosamine: Tyr-364 and Asn-375. Acetyl-CoA contacts are provided by residues Ala-378, 384-385 (NY), Ser-403, Ala-421, and Arg-438.

In the N-terminal section; belongs to the N-acetylglucosamine-1-phosphate uridyltransferase family. This sequence in the C-terminal section; belongs to the transferase hexapeptide repeat family. As to quaternary structure, homotrimer. It depends on Mg(2+) as a cofactor.

Its subcellular location is the cytoplasm. It catalyses the reaction alpha-D-glucosamine 1-phosphate + acetyl-CoA = N-acetyl-alpha-D-glucosamine 1-phosphate + CoA + H(+). The catalysed reaction is N-acetyl-alpha-D-glucosamine 1-phosphate + UTP + H(+) = UDP-N-acetyl-alpha-D-glucosamine + diphosphate. It functions in the pathway nucleotide-sugar biosynthesis; UDP-N-acetyl-alpha-D-glucosamine biosynthesis; N-acetyl-alpha-D-glucosamine 1-phosphate from alpha-D-glucosamine 6-phosphate (route II): step 2/2. It participates in nucleotide-sugar biosynthesis; UDP-N-acetyl-alpha-D-glucosamine biosynthesis; UDP-N-acetyl-alpha-D-glucosamine from N-acetyl-alpha-D-glucosamine 1-phosphate: step 1/1. Its pathway is bacterial outer membrane biogenesis; LPS lipid A biosynthesis. Catalyzes the last two sequential reactions in the de novo biosynthetic pathway for UDP-N-acetylglucosamine (UDP-GlcNAc). The C-terminal domain catalyzes the transfer of acetyl group from acetyl coenzyme A to glucosamine-1-phosphate (GlcN-1-P) to produce N-acetylglucosamine-1-phosphate (GlcNAc-1-P), which is converted into UDP-GlcNAc by the transfer of uridine 5-monophosphate (from uridine 5-triphosphate), a reaction catalyzed by the N-terminal domain. The chain is Bifunctional protein GlmU from Actinobacillus pleuropneumoniae serotype 7 (strain AP76).